Consider the following 426-residue polypeptide: Citrate transporter (426 aa).

Helical transmembrane passes span 1–21 (MLAI…MSNR), 22–42 (LSAL…SGFG), 59–79 (TGIM…SGLF), 86–106 (ILSF…VLTM), 137–157 (LVLA…PWGG), 176–196 (PLIP…YILG), 232–252 (LLTV…PVLF), 278–298 (AGNA…TGIL), 318–338 (AMGP…TFFM), 343–363 (FYFG…IDAA), 377–397 (LLSP…VSFG), and 406–426 (WAVG…IISF).

It belongs to the CitM (TC 2.A.11) transporter family.

It localises to the cell membrane. In terms of biological role, transports the free citrate anion. Probably cotransports citrate and at least three or four protons. The citrate uptake is inhibited by the presence of magnesium ions. The sequence is that of Citrate transporter (citN) from Bacillus subtilis (strain 168).